The following is a 682-amino-acid chain: MNTSIPYQQSPYSPRGGSNVIQCYRCGDTCKGEVVRVHNNHFHIRCFTCQVCGCGLAQSGFFFKNQEYICTQDYQQLYGTRCDSCRDFITGEVISALGRTYHPKCFVCSLCRKPFPIGDKVTFSGKECVCQTCSQSMTSSKPIKIRGPSHCAGCKEEIKHGQSLLALDKQWHVSCFKCQTCSVILTGEYISKDGVPYCESDYHSQFGIKCETCDRYISGRVLEAGGKHYHPTCARCVRCHQMFTEGEEMYLTGSEVWHPICKQAARAEKKLKHRRTSETSISPPGSSIGSPNRVICAKVDNEILNYKDLAALPKVKSIYEVQRPDLISYEPHSRYTSDEMLERCGYGESLGTLSPYSQDIYENLDLRQRRASSPGYIDSPTYSRQGMSPTFSRSPHYYRSGPESGRSSPYHSQLDVRSSTPTSYQAPKHFHIPAGESNIYRKPPIYKRHGDLSTATKSKTSEDISQASKYSPAYSPDPYYASESEYWTYHGSPKVPRARRFSSGGEEEDFDRSMHKLQSGIGRLILKEEMKARSSSYADPWTPPRSSTSSREALHTTGYEMSFNGSPRSHYLADSDPLISKSASLPAYRRNGLHRTPSADLFHYDSMNAVNWGMREYKIYPYELLLVTTRGRNRLPKDVDRTRLERHLSQEEFYQVFGMTISEFERLALWKRNELKKQARLF.

Residue M1 is modified to N-acetylmethionine. LIM zinc-binding domains are found at residues 21–80, 80–140, 149–208, and 208–268; these read IQCY…LYGT, TRCD…MTSS, SHCA…QFGI, and IKCE…ARAE. Phosphoserine occurs at positions 277, 280, 282, 286, 290, 337, 372, and 373. 2 disordered regions span residues 372–426 and 440–475; these read SSPG…SYQA and YRKP…PAYS. Y376 bears the Phosphotyrosine mark. Phosphoserine is present on residues S379 and S388. Composition is skewed to polar residues over residues 380 to 393, 405 to 425, and 453 to 466; these read PTYS…TFSR, GRSS…TSYQ, and STAT…DISQ. S492, S502, and S503 each carry phosphoserine. Residue T542 is modified to Phosphothreonine. Phosphoserine is present on residues S566, S575, and S606. The region spanning 614–682 is the HP domain; the sequence is MREYKIYPYE…NELKKQARLF (69 aa). At R630 the chain carries Omega-N-methylarginine.

Directly interacts with F-actin and ABRA. In terms of tissue distribution, expressed in heart, brain, lung and liver. In the brain, highly expressed in the olfactory bulb. In the hippocampus, expressed selectively in the CA2 and CA3 fields. In the cerebellum, expressed in internal granular cells.

The protein resides in the cytoplasm. Its function is as follows. May act as scaffold protein. May stimulate ABRA activity and ABRA-dependent SRF transcriptional activity. This Mus musculus (Mouse) protein is Actin-binding LIM protein 3 (Ablim3).